Reading from the N-terminus, the 425-residue chain is Enolase 2 (425 aa).

Glutamine 163 is a (2R)-2-phosphoglycerate binding site. Glutamate 205 functions as the Proton donor in the catalytic mechanism. Mg(2+)-binding residues include aspartate 242, glutamate 285, and aspartate 312. Residues lysine 337, arginine 366, serine 367, and lysine 388 each contribute to the (2R)-2-phosphoglycerate site. Lysine 337 acts as the Proton acceptor in catalysis.

This sequence belongs to the enolase family. The cofactor is Mg(2+).

Its subcellular location is the cytoplasm. The protein localises to the secreted. The protein resides in the cell surface. The catalysed reaction is (2R)-2-phosphoglycerate = phosphoenolpyruvate + H2O. It functions in the pathway carbohydrate degradation; glycolysis; pyruvate from D-glyceraldehyde 3-phosphate: step 4/5. Its function is as follows. Catalyzes the reversible conversion of 2-phosphoglycerate (2-PG) into phosphoenolpyruvate (PEP). It is essential for the degradation of carbohydrates via glycolysis. The protein is Enolase 2 of Cupriavidus metallidurans (strain ATCC 43123 / DSM 2839 / NBRC 102507 / CH34) (Ralstonia metallidurans).